The following is a 426-amino-acid chain: DNA damage-binding protein 2 (426 aa).

A compositionally biased stretch (basic and acidic residues) spans 1-11; the sequence is MAPRKRPENQK. The disordered stretch occupies residues 1-33; the sequence is MAPRKRPENQKTPEVVVRPKSKRNRSPRELEPE. Ser26 is subject to Phosphoserine. Residues Lys35 and Lys76 each carry the N6-acetyllysine modification. 2 required for interaction with DDB1 regions span residues 67 to 78 and 86 to 97; these read SIVRALHQHKLG and QQGLQQSFLNSL. WD repeat units lie at residues 115-150, 158-193, 202-237, 243-286, and 289-328; these read SLAW…TFIK, ITGM…LRVF, WFCS…LWNL, KVTH…SLPH, and PVNA…LIPH. Positions 255–273 match the DWD box motif; it reads WLLATASVDQTVKIWDLRQ. Positions 333 to 335 are photolesion recognition; it reads FQH. 2 WD repeats span residues 342–385 and 395–419; these read SWHP…MYQL and SLNE…VWSP.

The protein belongs to the WD repeat DDB2/WDR76 family. Component of the UV-DDB complex which includes DDB1 and DDB2. The UV-DDB complex interacts with monoubiquitinated histone H2A and binds to XPC via the DDB2 subunit. Component of the DCX (DDB1-CUL4-X-box) E3 ubiquitin-protein ligase complex DDB1-CUL4-ROC1 (also known as CUL4-DDB-ROC1 and CUL4-DDB-RBX1), which includes CUL4A or CUL4B, DDB1, DDB2 and RBX1. DDB2 may function as the substrate recognition module within this complex. The DDB1-CUL4-ROC1 complex may associate with the COP9 signalosome, and this inhibits the E3 ubiquitin-protein ligase activity of the complex. A large number of other DCX complexes may also exist in which an alternate substrate targeting subunit replaces DDB2. These targeting subunits are generally known as DCAF (DDB1- and CUL4-associated factor) or CDW (CUL4-DDB1-associated WD40-repeat) proteins. In terms of processing, phosphorylation by ABL1 negatively regulate UV-DDB activity. Post-translationally, ubiquitinated by CUL4A in response to UV irradiation. Ubiquitination appears to both impair DNA-binding and promotes ubiquitin-dependent proteolysis. Degradation of DDB2 at sites of DNA damage may be a prerequisite for their recognition by XPC and subsequent repair. CUL4A-mediated degradation appears to be promoted by ABL1. Ubiquitinated, leading to proteasomal degradation, and deubiquitinated by USP24. Deubiquitinated by USP44; leading to its stabilization on DNA lesions. In terms of processing, acetylated. Deacetylation by SIRT6 in response to UV stress facilitates nucleotide excision repair pathway (the NER pathway) transduction.

Its subcellular location is the nucleus. The protein localises to the chromosome. Its pathway is protein modification; protein ubiquitination. Its function is as follows. Protein, which is both involved in DNA repair and protein ubiquitination, as part of the UV-DDB complex and DCX (DDB1-CUL4-X-box) complexes, respectively. Core component of the UV-DDB complex (UV-damaged DNA-binding protein complex), a complex that recognizes UV-induced DNA damage and recruit proteins of the nucleotide excision repair pathway (the NER pathway) to initiate DNA repair. The UV-DDB complex preferentially binds to cyclobutane pyrimidine dimers (CPD), 6-4 photoproducts (6-4 PP), apurinic sites and short mismatches. Also functions as the substrate recognition module for the DCX (DDB2-CUL4-X-box) E3 ubiquitin-protein ligase complex DDB2-CUL4-ROC1 (also known as CUL4-DDB-ROC1 and CUL4-DDB-RBX1). The DDB2-CUL4-ROC1 complex may ubiquitinate histone H2A, histone H3 and histone H4 at sites of UV-induced DNA damage. The ubiquitination of histones may facilitate their removal from the nucleosome and promote subsequent DNA repair. The DDB2-CUL4-ROC1 complex also ubiquitinates XPC, which may enhance DNA-binding by XPC and promote NER. The DDB2-CUL4-ROC1 complex also ubiquitinates KAT7/HBO1 in response to DNA damage, leading to its degradation: recognizes KAT7/HBO1 following phosphorylation by ATR. This Bos taurus (Bovine) protein is DNA damage-binding protein 2 (DDB2).